A 418-amino-acid polypeptide reads, in one-letter code: L-rhamnose isomerase (418 aa).

H262, D294, and D296 together coordinate Mn(2+).

It belongs to the rhamnose isomerase family. Homotetramer. It depends on Mn(2+) as a cofactor.

The protein resides in the cytoplasm. It catalyses the reaction L-rhamnopyranose = L-rhamnulose. It participates in carbohydrate degradation; L-rhamnose degradation; glycerone phosphate from L-rhamnose: step 1/3. Catalyzes the interconversion of L-rhamnose and L-rhamnulose. This chain is L-rhamnose isomerase, found in Yersinia pestis bv. Antiqua (strain Antiqua).